A 467-amino-acid chain; its full sequence is Cruzipain (467 aa).

Positions 1–18 (MSGWARALLLAAVLVVMA) are cleaved as a signal peptide. A propeptide spans 19–122 (CLVPAATASL…RVPVKVEVVG (104 aa)) (activation peptide). Cystine bridges form between Cys-144-Cys-185, Cys-178-Cys-223, and Cys-277-Cys-325. Cys-147 is a catalytic residue. Residue Asn-169 is glycosylated (N-linked (GlcNAc...) asparagine). Residue His-284 is part of the active site. A glycan (N-linked (GlcNAc...) asparagine) is linked at Asn-292. Asn-304 is an active-site residue. A disordered region spans residues 333–355 (SAVVGGPGPTPEPTTTTTTSAPG). Low complexity predominate over residues 345 to 354 (PTTTTTTSAP). Asn-377 carries an N-linked (GlcNAc...) asparagine glycan.

It belongs to the peptidase C1 family.

It catalyses the reaction Broad endopeptidase specificity similar to that of cathepsin L.. With respect to regulation, strongly inhibited by E-64 (L-trans-epoxysuccinylleucylamido(4-guanidino)butane), Leupeptin, and N-alpha-p-tosyl-L-lysine chloromethyl ketone. Its function is as follows. Hydrolyzes chromogenic peptides at the carboxyl Arg or Lys; requires at least one more amino acid, preferably Arg, Phe, Val or Leu, between the terminal Arg or Lys and the amino-blocking group. In terms of biological role, the cysteine protease may play an important role in the development and differentiation of the parasites at several stages of their life cycle. This Trypanosoma cruzi protein is Cruzipain.